Reading from the N-terminus, the 347-residue chain is Cyclic AMP-dependent transcription factor ATF-4 (347 aa).

Residues 202-296 form a disordered region; the sequence is TPQCVKEEDT…AATRYRQKKR (95 aa). Thr211 carries the post-translational modification Phosphothreonine. Ser213, Ser217, Ser222, Ser229, and Ser233 each carry phosphoserine. A BetaTrCP degron motif motif is present at residues 213 to 222; sequence SDSDSGICMS. A compositionally biased stretch (polar residues) spans 228 to 238; that stretch reads GSPQHSPSTSR. Pro234 carries the post-translational modification 4-hydroxyproline. Phosphoserine is present on residues Ser243 and Ser246. Residues Lys256 and Lys268 each participate in a glycyl lysine isopeptide (Lys-Gly) (interchain with G-Cter in SUMO2) cross-link. Residues 269 to 283 are compositionally biased toward basic and acidic residues; sequence VKTEKLDKKLKKMEQ. Positions 274-337 constitute a bZIP domain; sequence LDKKLKKMEQ…QYLKDLIEEV (64 aa). Residues 276-296 are basic motif; that stretch reads KKLKKMEQNKTAATRYRQKKR. Residues 301 to 337 form an interaction with GABBR1 region; it reads ALTGECKELEKKNEALKEKADSLAKEIQYLKDLIEEV. The segment at 302–330 is leucine-zipper; sequence LTGECKELEKKNEALKEKADSLAKEIQYL. Residue Lys307 is modified to N6-acetyllysine.

The protein belongs to the bZIP family. In terms of assembly, binds DNA as a homodimer and as a heterodimer. Heterodimer; heterodimerizes with CEBPB. Heterodimer; heterodimerizes with DDIT3/CHOP. Interacts with CEP290 (via an N-terminal region). Interacts with NEK6, DAPK2 (isoform 2) and ZIPK/DAPK3. Interacts (via its leucine zipper domain) with GABBR1 and GABBR2 (via their C-termini). Forms a heterodimer with TXLNG in osteoblasts. Interacts (via its DNA binding domain) with FOXO1 (C-terminal half); the interaction occurs in osteoblasts and regulates glucose homeostasis through suppression of beta-cell proliferation and a decrease in insulin production. Interacts with SATB2; the interaction results in enhanced DNA binding and transactivation by these transcription factors. Interacts with ABRAXAS2. Interacts with TRIB3, inhibiting the transactivation activity of ATF4. Interacts with DISC1; which inhibits ATF4 transcription factor activity by disrupting ATF4 dimerization and DNA-binding. Interacts with EP300/p300; EP300/p300 stabilizes ATF4 and increases its transcriptional activity independently of its catalytic activity by preventing its ubiquitination. In terms of processing, ubiquitinated by SCF(BTRC) in response to mTORC1 signal, followed by proteasomal degradation and leading to down-regulate expression of SIRT4. Interaction with EP300/p300 inhibits ubiquitination by SCF(BTRC). Phosphorylation at Ser-243 by RPS6KA3/RSK2 in osteoblasts enhances transactivation activity and promotes osteoblast differentiation. Phosphorylated on the betaTrCP degron motif at Ser-217, followed by phosphorylation at Thr-211, Ser-222, Ser-229, Ser-233 and Ser-246, promoting interaction with BTRC and ubiquitination. Phosphorylation is promoted by mTORC1. Phosphorylation at Ser-213 by CK2 decreases its stability. Phosphorylated by NEK6. Post-translationally, hydroxylated by PHD3, leading to decreased protein stability. As to expression, expressed in brain, heart, liver, spleen, lung and muscle, but not testis.

The protein localises to the nucleus. The protein resides in the nucleus speckle. Its subcellular location is the cytoplasm. It is found in the cell membrane. It localises to the cytoskeleton. The protein localises to the microtubule organizing center. The protein resides in the centrosome. Transcription factor that binds the cAMP response element (CRE) (consensus: 5'-GTGACGT[AC][AG]-3') and displays two biological functions, as regulator of metabolic and redox processes under normal cellular conditions, and as master transcription factor during integrated stress response (ISR). Binds to asymmetric CRE's as a heterodimer and to palindromic CRE's as a homodimer. Core effector of the ISR, which is required for adaptation to various stress such as endoplasmic reticulum (ER) stress, amino acid starvation, mitochondrial stress or oxidative stress. During ISR, ATF4 translation is induced via an alternative ribosome translation re-initiation mechanism in response to EIF2S1/eIF-2-alpha phosphorylation, and stress-induced ATF4 acts as a master transcription factor of stress-responsive genes in order to promote cell recovery. Promotes the transcription of genes linked to amino acid sufficiency and resistance to oxidative stress to protect cells against metabolic consequences of ER oxidation. Activates the transcription of NLRP1, possibly in concert with other factors in response to ER stress. Activates the transcription of asparagine synthetase (ASNS) in response to amino acid deprivation or ER stress. However, when associated with DDIT3/CHOP, the transcriptional activation of the ASNS gene is inhibited in response to amino acid deprivation. Together with DDIT3/CHOP, mediates programmed cell death by promoting the expression of genes involved in cellular amino acid metabolic processes, mRNA translation and the terminal unfolded protein response (terminal UPR), a cellular response that elicits programmed cell death when ER stress is prolonged and unresolved. Activates the expression of COX7A2L/SCAF1 downstream of the EIF2AK3/PERK-mediated unfolded protein response, thereby promoting formation of respiratory chain supercomplexes and increasing mitochondrial oxidative phosphorylation. Together with DDIT3/CHOP, activates the transcription of the IRS-regulator TRIB3 and promotes ER stress-induced neuronal cell death by regulating the expression of BBC3/PUMA in response to ER stress. May cooperate with the UPR transcriptional regulator QRICH1 to regulate ER protein homeostasis which is critical for cell viability in response to ER stress. In the absence of stress, ATF4 translation is at low levels and it is required for normal metabolic processes such as embryonic lens formation, fetal liver hematopoiesis, bone development and synaptic plasticity. Acts as a regulator of osteoblast differentiation in response to phosphorylation by RPS6KA3/RSK2: phosphorylation in osteoblasts enhances transactivation activity and promotes expression of osteoblast-specific genes and post-transcriptionally regulates the synthesis of Type I collagen, the main constituent of the bone matrix. Cooperates with FOXO1 in osteoblasts to regulate glucose homeostasis through suppression of beta-cell production and decrease in insulin production. Activates transcription of SIRT4. Regulates the circadian expression of the core clock component PER2 and the serotonin transporter SLC6A4. Binds in a circadian time-dependent manner to the cAMP response elements (CRE) in the SLC6A4 and PER2 promoters and periodically activates the transcription of these genes. Mainly acts as a transcriptional activator in cellular stress adaptation, but it can also act as a transcriptional repressor: acts as a regulator of synaptic plasticity by repressing transcription, thereby inhibiting induction and maintenance of long-term memory. Regulates synaptic functions via interaction with DISC1 in neurons, which inhibits ATF4 transcription factor activity by disrupting ATF4 dimerization and DNA-binding. This Rattus norvegicus (Rat) protein is Cyclic AMP-dependent transcription factor ATF-4.